A 255-amino-acid polypeptide reads, in one-letter code: Imidazole glycerol phosphate synthase subunit HisF (255 aa).

Residues D11 and D130 contribute to the active site.

Belongs to the HisA/HisF family. In terms of assembly, heterodimer of HisH and HisF.

Its subcellular location is the cytoplasm. It catalyses the reaction 5-[(5-phospho-1-deoxy-D-ribulos-1-ylimino)methylamino]-1-(5-phospho-beta-D-ribosyl)imidazole-4-carboxamide + L-glutamine = D-erythro-1-(imidazol-4-yl)glycerol 3-phosphate + 5-amino-1-(5-phospho-beta-D-ribosyl)imidazole-4-carboxamide + L-glutamate + H(+). Its pathway is amino-acid biosynthesis; L-histidine biosynthesis; L-histidine from 5-phospho-alpha-D-ribose 1-diphosphate: step 5/9. Its function is as follows. IGPS catalyzes the conversion of PRFAR and glutamine to IGP, AICAR and glutamate. The HisF subunit catalyzes the cyclization activity that produces IGP and AICAR from PRFAR using the ammonia provided by the HisH subunit. The protein is Imidazole glycerol phosphate synthase subunit HisF of Rhodopseudomonas palustris (strain BisB5).